A 688-amino-acid polypeptide reads, in one-letter code: Small ribosomal subunit protein mS39 (688 aa).

A mitochondrion-targeting transit peptide spans 1–37; that stretch reads MASVASARWLRVSCGLCVPLTARRAGPCGRTPSSRFY. N6-acetyllysine is present on Lys-126. 10 PPR repeats span residues 149-183, 184-219, 258-292, 293-333, 334-370, 371-412, 415-449, 457-491, 492-526, and 575-609; these read IEEISEAALQERIKLKKVKASVDIFDQLLQAGTTV, SLETTNSLLDLLCYYGNQEPSTNYNFQQHEQTEELE, NAHSYCTMIRGMVKHRAHTQALSMYTELLNNRLRA, DVHT…NVKP, NLQTFNTILKCLRRFYAFGKLPALQTFREMKAIGIEP, SLAT…SPKD, DDMFFQSAMRVCSSLRDLELAYQVHGLLNTGDNRK, RNFYYSKFFSLLCLMEQIDVTLKWYKDLIPSVFFP, HSQTLIDLLQALDVANRLEMIPQIWKDSKEYGHTF, and PANSLNYIAILFLRAGRTQEAWKMLGLFRKHNKIP. The tract at residues 667 to 688 is disordered; it reads GDLTALTSDSESDSDSDTSKDK.

It belongs to the mitochondrion-specific ribosomal protein mS39 family. In terms of assembly, component of the mitochondrial ribosome small subunit (28S) which comprises a 12S rRNA and about 30 distinct proteins. Associated with the 12S mitochondrial rRNA (12S mt-rRNA).

The protein resides in the mitochondrion. Functionally, mitochondrial RNA-binding protein that has a role in mitochondrial translation. The polypeptide is Small ribosomal subunit protein mS39 (PTCD3) (Bos taurus (Bovine)).